The sequence spans 321 residues: Putative glucan endo-1,3-beta-glucosidase GVI (321 aa).

A signal peptide spans 1-6; it reads LAGVEG. Residue E100 is the Proton donor of the active site. E241 serves as the catalytic Nucleophile.

This sequence belongs to the glycosyl hydrolase 17 family.

The enzyme catalyses Hydrolysis of (1-&gt;3)-beta-D-glucosidic linkages in (1-&gt;3)-beta-D-glucans.. Its function is as follows. May provide a degree of protection against microbial invasion of germinated barley grain through its ability to degrade fungal cell wall polysaccharides. This chain is Putative glucan endo-1,3-beta-glucosidase GVI, found in Hordeum vulgare (Barley).